The sequence spans 98 residues: NADH-ubiquinone oxidoreductase chain 4L (98 aa).

3 helical membrane passes run 2 to 22 (PSTF…TLMF), 26 to 46 (LMST…MTSV), and 58 to 79 (PIPI…ALLV).

The protein belongs to the complex I subunit 4L family. As to quaternary structure, core subunit of respiratory chain NADH dehydrogenase (Complex I) which is composed of 45 different subunits.

The protein localises to the mitochondrion inner membrane. It carries out the reaction a ubiquinone + NADH + 5 H(+)(in) = a ubiquinol + NAD(+) + 4 H(+)(out). In terms of biological role, core subunit of the mitochondrial membrane respiratory chain NADH dehydrogenase (Complex I) which catalyzes electron transfer from NADH through the respiratory chain, using ubiquinone as an electron acceptor. Part of the enzyme membrane arm which is embedded in the lipid bilayer and involved in proton translocation. This chain is NADH-ubiquinone oxidoreductase chain 4L, found in Mus musculus (Mouse).